Reading from the N-terminus, the 728-residue chain is Microtubule-associated protein VP5 (728 aa).

The protein belongs to the reoviridae microtubule-associated protein family.

It is found in the virion. It localises to the host cytoplasm. Its subcellular location is the host cytoskeleton. In terms of biological role, minor inner capsid component. Displays NTPase and RNA 5'-triphosphatase (RTPase) activities. May function as a cofactor of polymerase. Associates with microtubules and plays a role in the formation, structural organization and morphology of viral inclusions, where the assembly of cores and the replication of viral RNA occur. This Ctenopharyngodon idella (Grass carp) protein is Microtubule-associated protein VP5 (S5).